The primary structure comprises 1368 residues: Protein suppressor 2 of zeste (1368 aa).

The RING-type zinc-finger motif lies at 35-74 (CRLCRGYMIDPTTVDYCYHTYCRSCILKHLLRAVYCPECK). 10 disordered regions span residues 245 to 321 (SRIN…FKSL), 448 to 628 (QPLQ…QQQQ), 640 to 718 (TLPT…AVPQ), 861 to 903 (AGGK…KRSC), 935 to 1001 (ALSG…NGTA), 1057 to 1103 (SANP…STSN), 1116 to 1141 (ISANSNGGPSTTSGSNSNGTTNGDDL), 1161 to 1193 (AASSGNGSGSTSSSSAKPKNANALVRPQNASVR), 1211 to 1271 (STAA…KKPT), and 1298 to 1322 (VLSSNAAKSPELAKTTTAVALRPEP). Polar residues predominate over residues 449–461 (PLQQSASNPDSKY). Over residues 462-495 (SPNASPMSSCSSSTNGSSSSLGTADASTSTSTSS) the composition is skewed to low complexity. A compositionally biased stretch (basic residues) spans 496 to 506 (SHRKRKKKHSK). Low complexity-rich tracts occupy residues 599–628 (AEPEQQQQQQQQQQQPQQQQQQQQQQQQQQ) and 672–689 (PKQQQQQMPQQPQAVLQQ). 2 stretches are compositionally biased toward polar residues: residues 936-953 (LSGQRNNKGNSSNSNAYR) and 962-977 (LRNTAAPQHSFPSKSS). 4 stretches are compositionally biased toward low complexity: residues 1078 to 1099 (NNNNNNNNNNNNNNNNNNNNNN), 1119 to 1138 (NSNGGPSTTSGSNSNGTTNG), 1161 to 1183 (AASSGNGSGSTSSSSAKPKNANA), and 1231 to 1263 (STSNPGSLSPTNTSSSSSSSSSGSSGCSAATSP).

Its subcellular location is the nucleus. Functionally, regulates expression of the homeotic selector genes by influencing higher-order chromatin structure through interaction with other proteins. The polypeptide is Protein suppressor 2 of zeste (Su(z)2) (Drosophila melanogaster (Fruit fly)).